A 377-amino-acid chain; its full sequence is N-acetyldiaminopimelate deacetylase (377 aa).

Asp-69 is a catalytic residue. Glu-128 (proton acceptor) is an active-site residue.

It belongs to the peptidase M20A family. N-acetyldiaminopimelate deacetylase subfamily.

The enzyme catalyses N-acetyl-(2S,6S)-2,6-diaminopimelate + H2O = (2S,6S)-2,6-diaminopimelate + acetate. Its pathway is amino-acid biosynthesis; L-lysine biosynthesis via DAP pathway; LL-2,6-diaminopimelate from (S)-tetrahydrodipicolinate (acetylase route): step 3/3. In terms of biological role, catalyzes the conversion of N-acetyl-diaminopimelate to diaminopimelate and acetate. This Streptococcus gordonii (strain Challis / ATCC 35105 / BCRC 15272 / CH1 / DL1 / V288) protein is N-acetyldiaminopimelate deacetylase.